Here is a 510-residue protein sequence, read N- to C-terminus: NAD(P)H-quinone oxidoreductase subunit 2 A, chloroplastic (510 aa).

Transmembrane regions (helical) follow at residues 24-44 (LLLF…GLIL), 59-79 (WFYF…LFRW), 99-119 (IFQF…VEYI), 124-144 (MAIT…MFLC), 149-169 (LITL…LSGY), 183-203 (YLLM…WLYG), 229-249 (ISIA…PAPF), 295-315 (WHLL…LIAI), 323-343 (MLAY…IVGD), 354-374 (YMLF…SFGL), 395-415 (ALSL…AGFF), and 418-438 (LHLF…IGLL).

It belongs to the complex I subunit 2 family. In terms of assembly, NDH is composed of at least 16 different subunits, 5 of which are encoded in the nucleus.

It localises to the plastid. The protein resides in the chloroplast thylakoid membrane. It carries out the reaction a plastoquinone + NADH + (n+1) H(+)(in) = a plastoquinol + NAD(+) + n H(+)(out). It catalyses the reaction a plastoquinone + NADPH + (n+1) H(+)(in) = a plastoquinol + NADP(+) + n H(+)(out). NDH shuttles electrons from NAD(P)H:plastoquinone, via FMN and iron-sulfur (Fe-S) centers, to quinones in the photosynthetic chain and possibly in a chloroplast respiratory chain. The immediate electron acceptor for the enzyme in this species is believed to be plastoquinone. Couples the redox reaction to proton translocation, and thus conserves the redox energy in a proton gradient. This is NAD(P)H-quinone oxidoreductase subunit 2 A, chloroplastic from Dioscorea elephantipes (Elephant's foot yam).